We begin with the raw amino-acid sequence, 722 residues long: Polyribonucleotide nucleotidyltransferase (722 aa).

Asp-486 and Asp-492 together coordinate Mg(2+). The KH domain occupies 553–612 (PRITTIQIRPEFIKNVIGPGGKVIKDIIARTGAAINIEDSGRVDIASANGEAVKAAIAMI). The 69-residue stretch at 622 to 690 (GKIYTGTVRK…KTGKIRLSRK (69 aa)) folds into the S1 motif domain. The segment at 696–722 (RAAQQGAAAGEAAAQPAPAPTQPDAKA) is disordered.

The protein belongs to the polyribonucleotide nucleotidyltransferase family. Mg(2+) serves as cofactor.

It localises to the cytoplasm. It carries out the reaction RNA(n+1) + phosphate = RNA(n) + a ribonucleoside 5'-diphosphate. Involved in mRNA degradation. Catalyzes the phosphorolysis of single-stranded polyribonucleotides processively in the 3'- to 5'-direction. In Myxococcus xanthus (strain DK1622), this protein is Polyribonucleotide nucleotidyltransferase.